The sequence spans 271 residues: Formamidopyrimidine-DNA glycosylase (271 aa).

The Schiff-base intermediate with DNA role is filled by proline 2. Catalysis depends on glutamate 3, which acts as the Proton donor. The Proton donor; for beta-elimination activity role is filled by lysine 58. Histidine 91, arginine 110, and arginine 152 together coordinate DNA. The segment at 237–271 (RVYGRTGLACMACETPVKQIVQGNRSTYYCPACQR) adopts an FPG-type zinc-finger fold. Arginine 261 serves as the catalytic Proton donor; for delta-elimination activity.

It belongs to the FPG family. Monomer. It depends on Zn(2+) as a cofactor.

It catalyses the reaction Hydrolysis of DNA containing ring-opened 7-methylguanine residues, releasing 2,6-diamino-4-hydroxy-5-(N-methyl)formamidopyrimidine.. The enzyme catalyses 2'-deoxyribonucleotide-(2'-deoxyribose 5'-phosphate)-2'-deoxyribonucleotide-DNA = a 3'-end 2'-deoxyribonucleotide-(2,3-dehydro-2,3-deoxyribose 5'-phosphate)-DNA + a 5'-end 5'-phospho-2'-deoxyribonucleoside-DNA + H(+). Functionally, involved in base excision repair of DNA damaged by oxidation or by mutagenic agents. Acts as a DNA glycosylase that recognizes and removes damaged bases. Has a preference for oxidized purines, such as 7,8-dihydro-8-oxoguanine (8-oxoG). Has AP (apurinic/apyrimidinic) lyase activity and introduces nicks in the DNA strand. Cleaves the DNA backbone by beta-delta elimination to generate a single-strand break at the site of the removed base with both 3'- and 5'-phosphates. This chain is Formamidopyrimidine-DNA glycosylase, found in Thioalkalivibrio sulfidiphilus (strain HL-EbGR7).